Here is a 378-residue protein sequence, read N- to C-terminus: Endopolygalacturonase I (378 aa).

A signal peptide spans 1-20 (MHLNTTLLVSLALGAASVLA). A propeptide spanning residues 21–39 (SPAPPAITAPPTAEEIAKR) is cleaved from the precursor. Cys-43 and Cys-61 form a disulfide bridge. Thr-44 carries O-linked (Man...) threonine glycosylation. Ser-46, Ser-48, Ser-52, Ser-53, Ser-55, Ser-57, and Ser-62 each carry an O-linked (Man...) serine glycan. O-linked (Man...) threonine glycosylation is present at Thr-63. A glycan (O-linked (Man...) serine) is linked at Ser-73. 5 PbH1 repeats span residues 174–204 (SDYL…DIGT), 205–226 (STYV…AVNS), 227–247 (GENI…SIGS), 256–277 (VKNV…RIKT), and 285–307 (VSDV…VVQQ). The active-site Proton donor is Asp-219. A disulfide bridge links Cys-221 with Cys-237. The active site involves His-241. Asn-258 is a glycosylation site (N-linked (GlcNAc...) asparagine). Intrachain disulfides connect Cys-345–Cys-350 and Cys-369–Cys-378.

This sequence belongs to the glycosyl hydrolase 28 family.

Its subcellular location is the secreted. It carries out the reaction (1,4-alpha-D-galacturonosyl)n+m + H2O = (1,4-alpha-D-galacturonosyl)n + (1,4-alpha-D-galacturonosyl)m.. Functionally, involved in maceration and soft-rotting of plant tissue. Hydrolyzes the 1,4-alpha glycosidic bonds of de-esterified pectate in the smooth region of the plant cell wall. The protein is Endopolygalacturonase I (pgaI) of Aspergillus aculeatus.